The following is a 123-amino-acid chain: Small ribosomal subunit protein uS12cz/uS12cy (123 aa).

This sequence belongs to the universal ribosomal protein uS12 family. Part of the 30S ribosomal subunit.

The protein localises to the plastid. It localises to the chloroplast. With S4 and S5 plays an important role in translational accuracy. Located at the interface of the 30S and 50S subunits. This is Small ribosomal subunit protein uS12cz/uS12cy (rps12-A) from Glycine max (Soybean).